The sequence spans 226 residues: 3-dehydroquinate dehydratase (226 aa).

3-dehydroquinate-binding positions include 33–35 and Arg-65; that span reads ELR. The active-site Proton donor/acceptor is the His-120. Catalysis depends on Lys-147, which acts as the Schiff-base intermediate with substrate. Residues Arg-186, Ser-205, and Gln-209 each coordinate 3-dehydroquinate.

Belongs to the type-I 3-dehydroquinase family. Homodimer.

The enzyme catalyses 3-dehydroquinate = 3-dehydroshikimate + H2O. It participates in metabolic intermediate biosynthesis; chorismate biosynthesis; chorismate from D-erythrose 4-phosphate and phosphoenolpyruvate: step 3/7. Involved in the third step of the chorismate pathway, which leads to the biosynthesis of aromatic amino acids. Catalyzes the cis-dehydration of 3-dehydroquinate (DHQ) and introduces the first double bond of the aromatic ring to yield 3-dehydroshikimate. This chain is 3-dehydroquinate dehydratase, found in Thermodesulfovibrio yellowstonii (strain ATCC 51303 / DSM 11347 / YP87).